A 550-amino-acid polypeptide reads, in one-letter code: ATP-dependent RNA helicase MSS116, mitochondrial (550 aa).

The segment covering 1-11 (MPPPPKRKWPN) has biased composition (basic residues). A mitochondrion-targeting transit peptide spans 1 to 41 (MPPPPKRKWPNRPRGGGGANGSASGTPTTPRSTVAQQPKRP). The disordered stretch occupies residues 1–51 (MPPPPKRKWPNRPRGGGGANGSASGTPTTPRSTVAQQPKRPKVEDAAPAAE). Residues 71 to 99 (FSELSSVLDKSLLDGLDKMGFEFMSPVQQ) carry the Q motif motif. The Helicase ATP-binding domain maps to 103–285 (TELPSLSSDC…KIVLFPGFTH (183 aa)). Residue 116 to 123 (AKTGTGKT) coordinates ATP. The DEAD box signature appears at 230–233 (DEAD). Positions 316 to 472 (ALSALIQEEH…KVPEQEAAIT (157 aa)) constitute a Helicase C-terminal domain.

The protein belongs to the DEAD box helicase family. DDX18/HAS1 subfamily.

The protein localises to the mitochondrion matrix. It carries out the reaction ATP + H2O = ADP + phosphate + H(+). In terms of biological role, ATP-dependent RNA helicase required for mitochondrial splicing of group I and II introns. Also required for efficient mitochondrial translation. The sequence is that of ATP-dependent RNA helicase MSS116, mitochondrial (MSS116) from Phaeosphaeria nodorum (strain SN15 / ATCC MYA-4574 / FGSC 10173) (Glume blotch fungus).